The sequence spans 180 residues: Large ribosomal subunit protein uL5 (180 aa).

The protein belongs to the universal ribosomal protein uL5 family. In terms of assembly, part of the 50S ribosomal subunit; part of the 5S rRNA/L5/L18/L25 subcomplex. Contacts the 5S rRNA and the P site tRNA. Forms a bridge to the 30S subunit in the 70S ribosome.

Its function is as follows. This is one of the proteins that bind and probably mediate the attachment of the 5S RNA into the large ribosomal subunit, where it forms part of the central protuberance. In the 70S ribosome it contacts protein S13 of the 30S subunit (bridge B1b), connecting the 2 subunits; this bridge is implicated in subunit movement. Contacts the P site tRNA; the 5S rRNA and some of its associated proteins might help stabilize positioning of ribosome-bound tRNAs. The chain is Large ribosomal subunit protein uL5 from Mycoplasma mycoides subsp. mycoides SC (strain CCUG 32753 / NCTC 10114 / PG1).